The sequence spans 391 residues: Casein kinase II subunit alpha (391 aa).

The tract at residues 36–41 (QDDYQL) is interaction with beta subunit. A Protein kinase domain is found at 39 to 324 (YQLVRKLGRG…AREAMEHPYF (286 aa)). ATP-binding positions include 45-53 (LGRGKYSEV) and K68. D156 serves as the catalytic Proton acceptor. A phosphothreonine; by CDK1 mark is found at T344 and T360. 2 positions are modified to phosphoserine; by CDK1: S362 and S370.

It belongs to the protein kinase superfamily. Ser/Thr protein kinase family. CK2 subfamily. Heterotetramer composed of two catalytic subunits (alpha chain and/or alpha' chain) and two regulatory subunits (beta chains). The tetramer can exist as a combination of 2 alpha/2 beta, 2 alpha'/2 beta or 1 alpha/1 alpha'/2 beta subunits. Also part of a CK2-SPT16-SSRP1 complex composed of SSRP1, SUPT16H, CSNK2A1, CSNK2A2 and CSNK2B, which forms following UV irradiation. Interacts with RNPS1. Interacts with SNAI1. Interacts with PML. Interacts with CCAR2. Interacts with HIRIP3. Phosphorylated at Thr-344, Thr-360, Ser-362 and Ser-370 by CDK1 in prophase and metaphase and dephosphorylated during anaphase. Phosphorylation does not directly affect casein kinase 2 activity, but may contribute to its regulation by forming binding sites for interacting proteins and/or targeting it to different compartments.

The protein localises to the nucleus. The enzyme catalyses L-seryl-[protein] + ATP = O-phospho-L-seryl-[protein] + ADP + H(+). It catalyses the reaction L-threonyl-[protein] + ATP = O-phospho-L-threonyl-[protein] + ADP + H(+). Its activity is regulated as follows. Constitutively active protein kinase whose activity is not directly affected by phosphorylation. Seems to be regulated by level of expression and localization. Its function is as follows. Catalytic subunit of a constitutively active serine/threonine-protein kinase complex that phosphorylates a large number of substrates containing acidic residues C-terminal to the phosphorylated serine or threonine. Regulates numerous cellular processes, such as cell cycle progression, apoptosis and transcription, as well as viral infection. May act as a regulatory node which integrates and coordinates numerous signals leading to an appropriate cellular response. During mitosis, functions as a component of the p53/TP53-dependent spindle assembly checkpoint (SAC) that maintains cyclin-B-CDK1 activity and G2 arrest in response to spindle damage. Also required for p53/TP53-mediated apoptosis, phosphorylating 'Ser-392' of p53/TP53 following UV irradiation. Phosphorylates a number of DNA repair proteins in response to DNA damage, such as MDC1, MRE11, RAD9A, RAD51 and HTATSF1, promoting their recruitment to DNA damage sites. Can also negatively regulate apoptosis. Phosphorylates the caspases CASP9 and CASP2 and the apoptotic regulator NOL3. Phosphorylation protects CASP9 from cleavage and activation by CASP8, and inhibits the dimerization of CASP2 and activation of CASP8. Phosphorylates YY1, protecting YY1 from cleavage by CASP7 during apoptosis. Regulates transcription by direct phosphorylation of RNA polymerases I, II, III and IV. Also phosphorylates and regulates numerous transcription factors including NF-kappa-B, STAT1, CREB1, IRF1, IRF2, ATF1, ATF4, SRF, MAX, JUN, FOS, MYC and MYB. Phosphorylates Hsp90 and its co-chaperones FKBP4 and CDC37, which is essential for chaperone function. Mediates sequential phosphorylation of FNIP1, promoting its gradual interaction with Hsp90, leading to activate both kinase and non-kinase client proteins of Hsp90. Regulates Wnt signaling by phosphorylating CTNNB1 and the transcription factor LEF1. Acts as an ectokinase that phosphorylates several extracellular proteins. Plays an important role in the circadian clock function by phosphorylating BMAL1 at 'Ser-90' which is pivotal for its interaction with CLOCK and which controls CLOCK nuclear entry. Phosphorylates FMR1, promoting FMR1-dependent formation of a membraneless compartment. May phosphorylate histone H2A on 'Ser-1'. The chain is Casein kinase II subunit alpha (CSNK2A1) from Bos taurus (Bovine).